The chain runs to 305 residues: MDNTELIEYFKSQIKEDPDMASAVAAIRTLLEYLRRDTGETIQGLRANLTSAIETLCGVDSSVAVSSGGELFLRFISLTSLEYSDYSKCKKIMIERGEIFLRRISLSRNKIADLCHTFIKDGARILTHAYSRVVLRVLEAAVAAKKRFSVYITESQPDLSGKKMAKALCHLNVPVTVVLDAAVGYIMEKVDLVIVGAEGVVENGGIINKIGTNQMAVCAKAQNKPFYVVAESFKFVRLFPLNQQDVPDKFKYKADTLKSVQTGQDLREEHPWVDYTSPSLITLLFTDLGVLTPSAVSDELIKLYL.

This sequence belongs to the eIF-2B alpha/beta/delta subunits family. As to quaternary structure, component of the translation initiation factor 2B (eIF2B) complex which is a heterodecamer of two sets of five different subunits: alpha, beta, gamma, delta and epsilon. Subunits alpha, beta and delta comprise a regulatory subcomplex and subunits epsilon and gamma comprise a catalytic subcomplex. Within the complex, the hexameric regulatory complex resides at the center, with the two heterodimeric catalytic subcomplexes bound on opposite sides.

It localises to the cytoplasm. The protein resides in the cytosol. With respect to regulation, activated by the chemical integrated stress response (ISR) inhibitor ISRIB which stimulates guanine nucleotide exchange factor activity for both phosphorylated and unphosphorylated eIF2. In terms of biological role, acts as a component of the translation initiation factor 2B (eIF2B) complex, which catalyzes the exchange of GDP for GTP on eukaryotic initiation factor 2 (eIF2) gamma subunit. Its guanine nucleotide exchange factor activity is repressed when bound to eIF2 complex phosphorylated on the alpha subunit, thereby limiting the amount of methionyl-initiator methionine tRNA available to the ribosome and consequently global translation is repressed. This is Translation initiation factor eIF2B subunit alpha (EIF2B1) from Bos taurus (Bovine).